A 179-amino-acid polypeptide reads, in one-letter code: Large ribosomal subunit protein uL5 (179 aa).

It belongs to the universal ribosomal protein uL5 family. In terms of assembly, part of the 50S ribosomal subunit; part of the 5S rRNA/L5/L18/L25 subcomplex. Contacts the 5S rRNA and the P site tRNA. Forms a bridge to the 30S subunit in the 70S ribosome.

This is one of the proteins that bind and probably mediate the attachment of the 5S RNA into the large ribosomal subunit, where it forms part of the central protuberance. In the 70S ribosome it contacts protein S13 of the 30S subunit (bridge B1b), connecting the 2 subunits; this bridge is implicated in subunit movement. Contacts the P site tRNA; the 5S rRNA and some of its associated proteins might help stabilize positioning of ribosome-bound tRNAs. The polypeptide is Large ribosomal subunit protein uL5 (Vibrio campbellii (strain ATCC BAA-1116)).